We begin with the raw amino-acid sequence, 182 residues long: Ribulose bisphosphate carboxylase small subunit, chloroplastic (182 aa).

Residues 1–58 (MACSMISSATVAAVSRASPAQSSMVAPFTCLKSTSAFPVTQKTNNDITSIASNGGRVQ) constitute a chloroplast transit peptide.

Belongs to the RuBisCO small chain family. In terms of assembly, heterohexadecamer of 8 large and 8 small subunits.

The protein resides in the plastid. The protein localises to the chloroplast. Functionally, ruBisCO catalyzes two reactions: the carboxylation of D-ribulose 1,5-bisphosphate, the primary event in carbon dioxide fixation, as well as the oxidative fragmentation of the pentose substrate. Both reactions occur simultaneously and in competition at the same active site. Although the small subunit is not catalytic it is essential for maximal activity. The polypeptide is Ribulose bisphosphate carboxylase small subunit, chloroplastic (Betula pendula (European white birch)).